Reading from the N-terminus, the 321-residue chain is D-alanine--D-alanine ligase (321 aa).

Positions 121-315 constitute an ATP-grasp domain; sequence RSWFLTNNIN…FTNLIEEIIK (195 aa). An ATP-binding site is contributed by 147–199; sequence PVKRPYVIKPLTQGSSIGVEVIFEEDDFNFADYNFPYGYQVIIEQYIKGRELQ. Residues glutamate 268, glutamate 282, and asparagine 284 each coordinate Mg(2+).

The protein belongs to the D-alanine--D-alanine ligase family. The cofactor is Mg(2+). Mn(2+) is required as a cofactor.

It is found in the cytoplasm. The catalysed reaction is 2 D-alanine + ATP = D-alanyl-D-alanine + ADP + phosphate + H(+). It participates in cell wall biogenesis; peptidoglycan biosynthesis. Functionally, cell wall formation. This chain is D-alanine--D-alanine ligase, found in Rickettsia felis (strain ATCC VR-1525 / URRWXCal2) (Rickettsia azadi).